The following is a 688-amino-acid chain: DNA ligase (688 aa).

NAD(+) contacts are provided by residues 38 to 42 (DEEYD), 87 to 88 (SL), and Glu-118. Catalysis depends on Lys-120, which acts as the N6-AMP-lysine intermediate. Arg-141, Glu-175, Lys-291, and Lys-315 together coordinate NAD(+). Residues Cys-409, Cys-412, Cys-428, and Cys-433 each contribute to the Zn(2+) site. Positions 590–679 (MKLDILKGLT…AELKGYNFDE (90 aa)) constitute a BRCT domain.

This sequence belongs to the NAD-dependent DNA ligase family. LigA subfamily. It depends on Mg(2+) as a cofactor. The cofactor is Mn(2+).

It catalyses the reaction NAD(+) + (deoxyribonucleotide)n-3'-hydroxyl + 5'-phospho-(deoxyribonucleotide)m = (deoxyribonucleotide)n+m + AMP + beta-nicotinamide D-nucleotide.. Its function is as follows. DNA ligase that catalyzes the formation of phosphodiester linkages between 5'-phosphoryl and 3'-hydroxyl groups in double-stranded DNA using NAD as a coenzyme and as the energy source for the reaction. It is essential for DNA replication and repair of damaged DNA. This Thermotoga petrophila (strain ATCC BAA-488 / DSM 13995 / JCM 10881 / RKU-1) protein is DNA ligase.